A 315-amino-acid chain; its full sequence is Replication factor C small subunit (315 aa).

43-50 (GSPGVGKT) is an ATP binding site.

The protein belongs to the activator 1 small subunits family. RfcS subfamily. In terms of assembly, heteromultimer composed of small subunits (RfcS) and large subunits (RfcL).

In terms of biological role, part of the RFC clamp loader complex which loads the PCNA sliding clamp onto DNA. The protein is Replication factor C small subunit of Methanococcus maripaludis (strain DSM 14266 / JCM 13030 / NBRC 101832 / S2 / LL).